Consider the following 213-residue polypeptide: Ras-related protein Rab-39B (213 aa).

Residues serine 17, glycine 20, lysine 21, serine 22, cysteine 23, serine 37, and threonine 40 each contribute to the GTP site. Serine 22 contacts Mg(2+). A switch-I region spans residues 35–43; sequence QVSDPTVGV. Mg(2+) contacts are provided by threonine 40 and aspartate 64. Residues glycine 67, histidine 123, lysine 124, aspartate 126, alanine 154, and arginine 155 each coordinate GTP. The switch-II stretch occupies residues 67-83; the sequence is GQERFRSITRAYYRNSV. Serine 201 is modified (phosphoserine). Residues cysteine 211 and cysteine 213 are each lipidated (S-geranylgeranyl cysteine). A Cysteine methyl ester modification is found at cysteine 213.

The protein belongs to the small GTPase superfamily. Rab family. As to quaternary structure, interacts (GDP-bound) with C9orf72; C9orf72 in complex with SMCR8 acts as a GEF for RAB39B. Interacts (in GTP-bound form) with PICK1 (via PDZ domain); a PICK1 homodimer may allow simultaneous association of RAB39B and GRIA2 to PICK1 which is involved in GRIA2 trafficking. Interacts with isoform c of RASSF1; the interaction is strong. Interacts with isoform a of RASSF1; the interaction is weak. Interacts with the DLG4/PSD-95. Interacts (GTP-bound) with HOPS complex components VPS39 and VPS41. Mg(2+) is required as a cofactor.

It localises to the cell membrane. The protein localises to the cytoplasmic vesicle membrane. Its subcellular location is the golgi apparatus. The protein resides in the cytoplasmic vesicle. It is found in the autophagosome membrane. It localises to the autolysosome membrane. The catalysed reaction is GTP + H2O = GDP + phosphate + H(+). With respect to regulation, regulated by guanine nucleotide exchange factors (GEFs) including C9orf72-SMCR8 complex, which promote the exchange of bound GDP for free GTP. Regulated by GTPase activating proteins (GAPs) which increase the GTP hydrolysis activity. Inhibited by GDP dissociation inhibitors (GDIs). The small GTPases Rab are key regulators of intracellular membrane trafficking, from the formation of transport vesicles to their fusion with membranes. Rabs cycle between an inactive GDP-bound form and an active GTP-bound form that is able to recruit to membranes different sets of downstream effectors directly responsible for vesicle formation, movement, tethering and fusion. RAB39B is involved in autophagy and may function in autophagosome formation. Binds downstream effector PICK1 to ensure selectively GRIA2 exit from the endoplasmic reticulum to the Golgi and to regulate AMPAR composition at the post-synapses and thus synaptic transmission. May regulate the homeostasis of SNCA/alpha-synuclein. This chain is Ras-related protein Rab-39B (RAB39B), found in Bos taurus (Bovine).